Consider the following 434-residue polypeptide: Na(+)/H(+) antiporter NhaA 1 (434 aa).

Transmembrane regions (helical) follow at residues 30–50 (TGGLLLLVFTVIALVWANVAG), 70–90 (LSIEHWAADGLLAIFFFVTGL), 108–128 (ALPIAAAVGGMAVPALLFVLV), 141–161 (VGWATPTATDIAFALGILAVV), 172–192 (FLLTLAVVDDLLGITVIAIFY), 195–215 (QVHWTPLLLALLTLAAFTVAV), 286–306 (FAVPVFALFSAGVAIGGVSGF), 318–338 (VIAGLVLGKPIGIVGTTWLLA), 354–374 (VLGMAMLAGMGFTVSLLIGSL), and 386–406 (VTLGVLVGSLLSAVLAAVVLS).

It belongs to the NhaA Na(+)/H(+) (TC 2.A.33) antiporter family.

It localises to the cell membrane. The catalysed reaction is Na(+)(in) + 2 H(+)(out) = Na(+)(out) + 2 H(+)(in). Functionally, na(+)/H(+) antiporter that extrudes sodium in exchange for external protons. This Kineococcus radiotolerans (strain ATCC BAA-149 / DSM 14245 / SRS30216) protein is Na(+)/H(+) antiporter NhaA 1.